A 274-amino-acid polypeptide reads, in one-letter code: Glutamate--cysteine ligase regulatory subunit (274 aa).

At Lys263 the chain carries N6-acetyllysine.

Belongs to the aldo/keto reductase family. Glutamate--cysteine ligase light chain subfamily. In terms of assembly, heterodimer of a catalytic heavy chain and a regulatory light chain. As to expression, in all tissues examined. Highest levels in skeletal muscle.

It functions in the pathway sulfur metabolism; glutathione biosynthesis; glutathione from L-cysteine and L-glutamate: step 1/2. In Homo sapiens (Human), this protein is Glutamate--cysteine ligase regulatory subunit (GCLM).